Consider the following 319-residue polypeptide: Cobalamin biosynthesis protein CbiB (319 aa).

5 helical membrane-spanning segments follow: residues 56–76 (VMWV…LALA), 82–102 (WFGW…RSLA), 153–173 (VDGI…LAMA), 204–224 (VANY…AGLC), and 296–316 (LMWV…CGLS).

The protein belongs to the CobD/CbiB family.

Its subcellular location is the cell membrane. The protein operates within cofactor biosynthesis; adenosylcobalamin biosynthesis. Converts cobyric acid to cobinamide by the addition of aminopropanol on the F carboxylic group. However, the true cosubstrate could be (R)-1-amino-2-propanol O-2-phosphate, leading to cobinamide phosphate. This Salmonella choleraesuis (strain SC-B67) protein is Cobalamin biosynthesis protein CbiB.